Consider the following 199-residue polypeptide: NAD(P)H dehydrogenase (quinone) (199 aa).

Residues 4 to 190 form the Flavodoxin-like domain; the sequence is MLVLYYSAYG…DGARFQGRRV (187 aa). Residues 10 to 15 and 78 to 80 each bind FMN; these read SAYGYM and TRY. Position 12 (Tyr12) interacts with NAD(+). Trp98 contacts substrate. Residues 113–119 and His134 contribute to the FMN site; that span reads STATQHG. Residues 158–181 form a disordered region; sequence GAPYGMTTTADGDGSRQPSAQELD. Positions 163 to 177 are enriched in polar residues; the sequence is MTTTADGDGSRQPSA.

This sequence belongs to the WrbA family. It depends on FMN as a cofactor.

It catalyses the reaction a quinone + NADH + H(+) = a quinol + NAD(+). The catalysed reaction is a quinone + NADPH + H(+) = a quinol + NADP(+). This is NAD(P)H dehydrogenase (quinone) from Brucella abortus (strain S19).